The chain runs to 321 residues: Cytochrome f (321 aa).

A signal peptide spans 1–35 (MQNRKTYDDWVKKWITQSISVLIMIDIMTRTSIAN). Tyr37, Cys57, Cys60, and His61 together coordinate heme. The helical transmembrane segment at 287–307 (VQGLLLFLASVVLAQIFLVLK) threads the bilayer.

Belongs to the cytochrome f family. As to quaternary structure, the 4 large subunits of the cytochrome b6-f complex are cytochrome b6, subunit IV (17 kDa polypeptide, petD), cytochrome f and the Rieske protein, while the 4 small subunits are PetG, PetL, PetM and PetN. The complex functions as a dimer. The cofactor is heme.

The protein localises to the plastid. Its subcellular location is the chloroplast thylakoid membrane. In terms of biological role, component of the cytochrome b6-f complex, which mediates electron transfer between photosystem II (PSII) and photosystem I (PSI), cyclic electron flow around PSI, and state transitions. The chain is Cytochrome f from Cryptomeria japonica (Japanese cedar).